We begin with the raw amino-acid sequence, 309 residues long: Acetylglutamate kinase (309 aa).

Substrate-binding positions include 82–83, R104, and N206; that span reads GG.

This sequence belongs to the acetylglutamate kinase family. ArgB subfamily.

The protein localises to the cytoplasm. It catalyses the reaction N-acetyl-L-glutamate + ATP = N-acetyl-L-glutamyl 5-phosphate + ADP. It participates in amino-acid biosynthesis; L-arginine biosynthesis; N(2)-acetyl-L-ornithine from L-glutamate: step 2/4. Its function is as follows. Catalyzes the ATP-dependent phosphorylation of N-acetyl-L-glutamate. This chain is Acetylglutamate kinase, found in Cupriavidus pinatubonensis (strain JMP 134 / LMG 1197) (Cupriavidus necator (strain JMP 134)).